We begin with the raw amino-acid sequence, 299 residues long: Oxygen-dependent coproporphyrinogen-III oxidase (299 aa).

S92 contacts substrate. Residues H96 and H106 each contribute to the a divalent metal cation site. The active-site Proton donor is H106. 108–110 (NVR) serves as a coordination point for substrate. Residues H145 and H175 each coordinate a divalent metal cation. Positions 240 to 275 (YVEFNLVWDRGTLFGLQTGGRTESILMSMPPLVRWE) are important for dimerization. 258-260 (GGR) lines the substrate pocket.

The protein belongs to the aerobic coproporphyrinogen-III oxidase family. As to quaternary structure, homodimer. Requires a divalent metal cation as cofactor.

It localises to the cytoplasm. The catalysed reaction is coproporphyrinogen III + O2 + 2 H(+) = protoporphyrinogen IX + 2 CO2 + 2 H2O. It functions in the pathway porphyrin-containing compound metabolism; protoporphyrin-IX biosynthesis; protoporphyrinogen-IX from coproporphyrinogen-III (O2 route): step 1/1. Functionally, involved in the heme biosynthesis. Catalyzes the aerobic oxidative decarboxylation of propionate groups of rings A and B of coproporphyrinogen-III to yield the vinyl groups in protoporphyrinogen-IX. This chain is Oxygen-dependent coproporphyrinogen-III oxidase, found in Salmonella paratyphi B (strain ATCC BAA-1250 / SPB7).